Consider the following 222-residue polypeptide: uncharacterized protein (222 aa).

4 helical membrane-spanning segments follow: residues 25-45 (LLWL…PATA), 80-100 (LLGA…ALIY), 111-131 (FAIM…FPLL), and 160-180 (LALT…VPFF).

Its subcellular location is the cell membrane. This is an uncharacterized protein from Bacillus subtilis (strain 168).